The sequence spans 32 residues: Ranatuerin-2CSa (32 aa).

The cysteines at positions 27 and 32 are disulfide-linked.

In terms of tissue distribution, expressed by the skin glands.

Its subcellular location is the secreted. It is found in the target cell membrane. In terms of biological role, antibacterial peptide with amphipathic alpha-helical structure. Active against E.coli ATCC 25726 (MIC=4-5 uM) and S.aureus ATCC 25923 (MIC=8-10 uM). Has a weak hemolytic activity on human erythrocytes (LC(50)=150-160 uM). The sequence is that of Ranatuerin-2CSa from Rana cascadae (Cascades frog).